The following is a 249-amino-acid chain: Small ribosomal subunit protein uS3 (249 aa).

A KH type-2 domain is found at 39 to 108 (IRQLINKKLA…TVAVNVAEIP (70 aa)). Residues 214–249 (ETFARPQRRDRDERRPEGGDRPARRRPTARRRTGGE) form a disordered region. The span at 220-235 (QRRDRDERRPEGGDRP) shows a compositional bias: basic and acidic residues. A compositionally biased stretch (basic residues) spans 236–249 (ARRRPTARRRTGGE).

Belongs to the universal ribosomal protein uS3 family. In terms of assembly, part of the 30S ribosomal subunit. Forms a tight complex with proteins S10 and S14.

Functionally, binds the lower part of the 30S subunit head. Binds mRNA in the 70S ribosome, positioning it for translation. The polypeptide is Small ribosomal subunit protein uS3 (Deinococcus radiodurans (strain ATCC 13939 / DSM 20539 / JCM 16871 / CCUG 27074 / LMG 4051 / NBRC 15346 / NCIMB 9279 / VKM B-1422 / R1)).